The following is a 286-amino-acid chain: 2-dehydro-3-deoxyphosphooctonate aldolase (286 aa).

The protein belongs to the KdsA family.

Its subcellular location is the cytoplasm. It catalyses the reaction D-arabinose 5-phosphate + phosphoenolpyruvate + H2O = 3-deoxy-alpha-D-manno-2-octulosonate-8-phosphate + phosphate. The protein operates within carbohydrate biosynthesis; 3-deoxy-D-manno-octulosonate biosynthesis; 3-deoxy-D-manno-octulosonate from D-ribulose 5-phosphate: step 2/3. It participates in bacterial outer membrane biogenesis; lipopolysaccharide biosynthesis. The chain is 2-dehydro-3-deoxyphosphooctonate aldolase from Haemophilus ducreyi (strain 35000HP / ATCC 700724).